A 322-amino-acid polypeptide reads, in one-letter code: Acetyl-coenzyme A carboxylase carboxyl transferase subunit alpha (322 aa).

Positions 43-297 (ALKSKSNALT…KEVLTQQLNK (255 aa)) constitute a CoA carboxyltransferase C-terminal domain.

This sequence belongs to the AccA family. In terms of assembly, acetyl-CoA carboxylase is a heterohexamer composed of biotin carboxyl carrier protein (AccB), biotin carboxylase (AccC) and two subunits each of ACCase subunit alpha (AccA) and ACCase subunit beta (AccD).

The protein resides in the cytoplasm. The catalysed reaction is N(6)-carboxybiotinyl-L-lysyl-[protein] + acetyl-CoA = N(6)-biotinyl-L-lysyl-[protein] + malonyl-CoA. It participates in lipid metabolism; malonyl-CoA biosynthesis; malonyl-CoA from acetyl-CoA: step 1/1. Functionally, component of the acetyl coenzyme A carboxylase (ACC) complex. First, biotin carboxylase catalyzes the carboxylation of biotin on its carrier protein (BCCP) and then the CO(2) group is transferred by the carboxyltransferase to acetyl-CoA to form malonyl-CoA. This is Acetyl-coenzyme A carboxylase carboxyl transferase subunit alpha from Vesicomyosocius okutanii subsp. Calyptogena okutanii (strain HA).